We begin with the raw amino-acid sequence, 358 residues long: MSSPLEKPQIIAHVQKSVNYTLFDCKWIPCSAKFVCVGNLARGSGVLQVYEIQQGEAKLLQETEKPKPIKCGTFGASSMQQRYLATGDFGGNLNIWNLEAPDTPVYSAKGHNEIINCIDGVGGVGIGDGAPEIVTGSRDGTVKVWDPRQKDTPVANMEPAAGEAKRDCWTVAFGNAYNEQERAVCAGYDNGDIKLFDLRNMSVRWETNIKNGVCSLEFDRKDIVMNKLVATSLEGKFHVFDMRTQHPTKGFASVSEKAHKSTVWQVRHLPQNRDVFMTSGGAGNLHLWKYEYPAQRSRKDSDGVDTGVAGSASLLQNVTLSTQPISSLDWSPDKKGLCVCTSFDQTVRVLIVTKLNRL.

WD repeat units lie at residues 64–106 (EKPK…TPVY), 116–155 (NCID…TPVA), 163–206 (EAKR…VRWE), 208–250 (NIKN…PTKG), 258–298 (AHKS…QRSR), and 320–358 (LSTQ…LNRL).

As to quaternary structure, interacts with PIH1D1; the interaction associates DNAAF10 with the R2TP complex. Interacts with several dynein axonemal assembly factors.

The protein localises to the dynein axonemal particle. Its function is as follows. Key assembly factor specifically required for the stability of axonemal dynein heavy chains in cytoplasm. The polypeptide is Dynein axonemal assembly factor 10 (dnaaf10) (Xenopus laevis (African clawed frog)).